A 101-amino-acid polypeptide reads, in one-letter code: Small ribosomal subunit protein uS14 (101 aa).

It belongs to the universal ribosomal protein uS14 family. Part of the 30S ribosomal subunit. Contacts proteins S3 and S10.

In terms of biological role, binds 16S rRNA, required for the assembly of 30S particles and may also be responsible for determining the conformation of the 16S rRNA at the A site. This is Small ribosomal subunit protein uS14 from Nitrosospira multiformis (strain ATCC 25196 / NCIMB 11849 / C 71).